The sequence spans 170 residues: Probable peptide methionine sulfoxide reductase (170 aa).

It belongs to the MsrA Met sulfoxide reductase family.

It localises to the cytoplasm. The protein localises to the nucleus. It catalyses the reaction L-methionyl-[protein] + [thioredoxin]-disulfide + H2O = L-methionyl-(S)-S-oxide-[protein] + [thioredoxin]-dithiol. The catalysed reaction is [thioredoxin]-disulfide + L-methionine + H2O = L-methionine (S)-S-oxide + [thioredoxin]-dithiol. In terms of biological role, has an important function as a repair enzyme for proteins that have been inactivated by oxidation. Catalyzes the reversible oxidation-reduction of methionine sulfoxide in proteins to methionine. The polypeptide is Probable peptide methionine sulfoxide reductase (mxr1) (Schizosaccharomyces pombe (strain 972 / ATCC 24843) (Fission yeast)).